A 279-amino-acid chain; its full sequence is Thymidylate synthase (279 aa).

132–133 (RR) serves as a coordination point for dUMP. The active-site Nucleophile is Cys-153. DUMP contacts are provided by residues 178–181 (RSND), Asn-189, and 219–221 (HIY). Asp-181 contacts (6R)-5,10-methylene-5,6,7,8-tetrahydrofolate. Position 278 (Ala-278) interacts with (6R)-5,10-methylene-5,6,7,8-tetrahydrofolate.

It belongs to the thymidylate synthase family. Bacterial-type ThyA subfamily. In terms of assembly, homodimer.

It is found in the cytoplasm. It catalyses the reaction dUMP + (6R)-5,10-methylene-5,6,7,8-tetrahydrofolate = 7,8-dihydrofolate + dTMP. It functions in the pathway pyrimidine metabolism; dTTP biosynthesis. Its function is as follows. Catalyzes the reductive methylation of 2'-deoxyuridine-5'-monophosphate (dUMP) to 2'-deoxythymidine-5'-monophosphate (dTMP) while utilizing 5,10-methylenetetrahydrofolate (mTHF) as the methyl donor and reductant in the reaction, yielding dihydrofolate (DHF) as a by-product. This enzymatic reaction provides an intracellular de novo source of dTMP, an essential precursor for DNA biosynthesis. This Lactococcus lactis subsp. lactis (strain IL1403) (Streptococcus lactis) protein is Thymidylate synthase.